Consider the following 683-residue polypeptide: Leishmanolysin-like peptidase (683 aa).

His-257 is a Zn(2+) binding site. Glu-258 is a catalytic residue. Zn(2+) is bound by residues His-261 and His-364.

This sequence belongs to the peptidase M8 family. The cofactor is Zn(2+).

It localises to the cytoplasm. Its function is as follows. Essential for the coordination of mitotic progression, and also plays a role in cell migration. In Drosophila melanogaster (Fruit fly), this protein is Leishmanolysin-like peptidase (Invadolysin).